The primary structure comprises 88 residues: MVKISVSRFGSKHNPHYRIVVTDVRRKRDGAYIEKIGYYDPRKTTPDWLKVDVERARYWLSVGAQPTDTARRLLRQAGVFRQEAREGA.

The protein belongs to the bacterial ribosomal protein bS16 family.

The sequence is that of Small ribosomal subunit protein bS16 from Thermus aquaticus.